A 1015-amino-acid chain; its full sequence is Probable beta-galactosidase B (1015 aa).

A signal peptide spans 1–20 (MAHIYRLLLLLLSNLWFSTA). N-linked (GlcNAc...) asparagine glycosylation is present at Asn-23. Tyr-90 contacts substrate. N-linked (GlcNAc...) asparagine glycosylation is found at Asn-99 and Asn-100. Residues Asn-135, Ala-136, and Glu-137 each coordinate substrate. An N-linked (GlcNAc...) asparagine glycan is attached at Asn-172. Substrate is bound at residue Asn-195. The Proton donor role is filled by Glu-196. Residue Asn-211 is glycosylated (N-linked (GlcNAc...) asparagine). Tyr-265 lines the substrate pocket. A disulfide bond links Cys-271 and Cys-324. Glu-308 serves as the catalytic Nucleophile. Tyr-373 serves as a coordination point for substrate. Residues Asn-411, Asn-456, Asn-554, Asn-679, Asn-735, Asn-775, and Asn-821 are each glycosylated (N-linked (GlcNAc...) asparagine).

This sequence belongs to the glycosyl hydrolase 35 family.

The protein resides in the secreted. It carries out the reaction Hydrolysis of terminal non-reducing beta-D-galactose residues in beta-D-galactosides.. In terms of biological role, cleaves beta-linked terminal galactosyl residues from gangliosides, glycoproteins, and glycosaminoglycans. In Aspergillus fumigatus (strain CBS 144.89 / FGSC A1163 / CEA10) (Neosartorya fumigata), this protein is Probable beta-galactosidase B (lacB).